Consider the following 161-residue polypeptide: DNA-directed RNA polymerase 19 kDa subunit (161 aa).

Residues 1-32 are compositionally biased toward acidic residues; sequence MADTDDIIDYESDDLTEYEDDEEDGESLETSD. Positions 1-35 are disordered; it reads MADTDDIIDYESDDLTEYEDDEEDGESLETSDIDP.

This sequence belongs to the poxviridae DNA-directed RNA polymerase 19 kDa subunit family. As to quaternary structure, the DNA-dependent RNA polymerase used for intermediate and late genes expression consists of eight subunits Rpo30/OPG66, Rpo7/OPG90, Rpo22/OPG103, Rpo147/OPG105, Rpo18/OPG119, Rpo19/OPG131, Rpo132/OPG151 and Rpo35/OPG156. The same holoenzyme, with the addition of the transcription-specificity factor OPG109, is used for early gene expression.

It localises to the virion. It catalyses the reaction RNA(n) + a ribonucleoside 5'-triphosphate = RNA(n+1) + diphosphate. Part of the DNA-dependent RNA polymerase which catalyzes the transcription of viral DNA into RNA using the four ribonucleoside triphosphates as substrates. Responsible for the transcription of early, intermediate and late genes. DNA-dependent RNA polymerase associates with the early transcription factor (ETF), itself composed of OPG118 and OPG133, thereby allowing the early genes transcription. Late transcription, and probably also intermediate transcription, require newly synthesized RNA polymerase. This is DNA-directed RNA polymerase 19 kDa subunit (OPG131) from Monkeypox virus.